The chain runs to 66 residues: Large ribosomal subunit protein bL35 (66 aa).

A compositionally biased stretch (basic residues) spans H24–R43. Residues H24–L44 are disordered.

It belongs to the bacterial ribosomal protein bL35 family.

The sequence is that of Large ribosomal subunit protein bL35 from Dictyoglomus thermophilum (strain ATCC 35947 / DSM 3960 / H-6-12).